The following is a 1711-amino-acid chain: MRPLILLAALLWLQGFLAEDDACSSLEGSPDRQGGGPLLSVNVSSHGKSTSLFLSWVAAELGGFDYALSLRSVNSSGSPEGQQLQAHTNESGFEFHGLVPGSRYQLKLTVLRPCWQNVTITLTARTAPTVVRGLQLHSAGSPARLEASWSDAPGDQDSYQLLLYHLESQTLACNVSVSPDTLSYSFGDLLPGTQYVLEVITWAGSLHAKTSILQWTEPVPPDHLALRALGTSSLQAFWNSSEGATSFHLMLTDLLGGTNTTAVIRQGVSTHTFLHLSPGTPHELKICASAGPHQIWGPSATEWTYPSYPSDLVLTPLRNELWASWKAGLGARDGYVLKLSGPMESTSTLGPEECNAVFPGPLPPGHYTLQLKVLAGPYDAWVEGSTWLAESAALPREVPGARLWLDGLEASKQPGRRALLYSDDAPGSLGNISVPSGATHVIFCGLVPGAHYRVDIASSTGDISQSISGYTSPLPPQSLEVISRSSPSDLTIAWGPAPGQLEGYKVTWHQDGSQRSPGDLVDLGPDTLSLTLKSLVPGSCYTVSAWAWAGNLDSDSQKIHSCTRPAPPTNLSLGFAHQPAALKASWYHPPGGRDAFHLRLYRLRPLTLESEKVLPREAQNFSWAQLTAGCEFQVQLSTLWGSERSSSANATGWTPPSAPTLVNVTSDAPTQLQVSWAHVPGGRSRYQVTLYQESTRTATSIMGPKEDGTSFLGLTPGTKYKVEVISWAGPLYTAAANVSAWTYPLIPNELLVSMQAGSAVVNLAWPSGPLGQGACHAQLSDAGHLSWEQPLKLGQELFMLRDLTPGHTISMSVRCRAGPLQASTHLVVLSVEPGPVEDVLCHPEATYLALNWTMPAGDVDVCLVVVERLVPGGGTHFVFQVNTSGDALLLPNLMPTTSYRLSLTVLGRNSRWSRAVSLVCSTSAEAWHPPELAEPPQVELGTGMGVTVMRGMFGKDDGQIQWYGIIATINMTLAQPSREAINYTWYDHYYRGCESFLALLFPNPFYPEPWAGPRSWTVPVGTEDCDNTQEICNGRLKSGFQYRFSVVAFSRLNTPETILAFSAFSEPRASISLAIIPLTVMLGAVVGSIVIVCAVLCLLRWRCLKGPRSEKDGFSKELMPYNLWRTHRPIPIHSFRQSYEAKSAHAHQTFFQEFEELKEVGKDQPRLEAEHPDNIIKNRYPHVLPYDHSRVRLTQLPGEPHSDYINANFIPGYSHTQEIIATQGPLKKTLEDFWRLVWEQQVHVIIMLTVGMENGRVLCEHYWPANSTPVTHGHITIHLLAEEPEDEWTRREFQLQHGTEQKQRRVKQLQFTTWPDHSVPEAPSSLLAFVELVQEQVQATQGKGPILVHCSAGVGRTGTFVALLRLLRQLEEEKVADVFNTVYILRLHRPLMIQTLSQYIFLHSCLLNKILEGPPDSSDSGPISVMDFAQACAKRAANANAGFLKEYKLLKQAIKDGTGSLLPPPDYNQNSIVSRRHSQEQFALVEECPEDSMLEASLFPGGPSGCDHVVLTGSAGPKELWEMVWEHDAHVLVSLGLPDTKEKPPDIWPVEMQPIVTDMVTVHRVSESNTTTGWPSTLFRVIHGESGKERQVQCLQFPCSESGCELPANTLLTFLDAVGQCCFRGKSKKPGTLLSHSSKNTNQLGTFLAMEQLLQQAGTERTVDVFNVALKQSQACGLMTPTLEQYIYLYNCLNSALLNGLPRAGKWPAPC.

The first 17 residues, 1 to 17 (MRPLILLAALLWLQGFL), serve as a signal peptide directing secretion. Topologically, residues 18–1074 (AEDDACSSLE…SEPRASISLA (1057 aa)) are extracellular. Fibronectin type-III domains follow at residues 37-129 (PLLS…TAPT), 130-222 (VVRG…VPPD), 218-305 (PVPP…EWTY), 306-391 (PSYP…LAES), 393-470 (ALPR…ISGY), 475-569 (PPQS…APPT), 565-654 (PAPP…TGWT), 655-749 (PPSA…IPNE), 744-831 (PLIP…VLSV), and 832-926 (EPGP…SAEA). 7 N-linked (GlcNAc...) asparagine glycosylation sites follow: Asn-42, Asn-74, Asn-89, Asn-117, Asn-174, Asn-239, and Asn-259. Asn-431 carries an N-linked (GlcNAc...) asparagine glycan. Residues Asn-570, Asn-620, Asn-649, Asn-663, and Asn-737 are each glycosylated (N-linked (GlcNAc...) asparagine). N-linked (GlcNAc...) asparagine glycosylation is found at Asn-851, Asn-882, Asn-970, and Asn-982. Residues 1075 to 1095 (IIPLTVMLGAVVGSIVIVCAV) form a helical membrane-spanning segment. At 1096 to 1711 (LCLLRWRCLK…PRAGKWPAPC (616 aa)) the chain is on the cytoplasmic side. 2 consecutive Tyrosine-protein phosphatase domains span residues 1150 to 1409 (FFQE…LLNK) and 1427 to 1696 (DFAQ…LNSA). Residues Asp-1316, 1350 to 1356 (CSAGVGR), and Gln-1394 contribute to the substrate site. Cys-1350 functions as the Phosphocysteine intermediate in the catalytic mechanism.

It belongs to the protein-tyrosine phosphatase family. Receptor class 3 subfamily. Post-translationally, the cytoplasmic domain contains potential phosphorylation sites. As to expression, bone and testis. In the latter, restricted to the basal portion of the seminiferous tubule.

It localises to the membrane. The catalysed reaction is O-phospho-L-tyrosyl-[protein] + H2O = L-tyrosyl-[protein] + phosphate. In terms of biological role, protein tyrosine phosphatase that acts as a regulator of energy metabolism. Prevents decarboxylation of osteocalcin (Bglap) via an indirect mechanism, preventing the hormone activity of osteocalcin. Functions in signaling pathways during bone remodeling, as well as serve a broader role in cell interactions associated with differentiation in bone and testis. Associated with differentiation in bone and testis. The protein is Receptor-type tyrosine-protein phosphatase V (Ptprv) of Rattus norvegicus (Rat).